We begin with the raw amino-acid sequence, 345 residues long: GTPase Obg (345 aa).

One can recognise an Obg domain in the interval 1 to 158 (MFIDSVKITL…RLVRLELKLI (158 aa)). The region spanning 159-339 (ADVGLVGFPN…LKFMLLEEIK (181 aa)) is the OBG-type G domain. Residues 165 to 172 (GFPNVGKS), 190 to 194 (FTTLT), 212 to 215 (DIPG), 280 to 283 (SKSD), and 320 to 322 (SSL) contribute to the GTP site. Mg(2+) is bound by residues Ser-172 and Thr-192.

It belongs to the TRAFAC class OBG-HflX-like GTPase superfamily. OBG GTPase family. In terms of assembly, monomer. It depends on Mg(2+) as a cofactor.

The protein resides in the cytoplasm. Functionally, an essential GTPase which binds GTP, GDP and possibly (p)ppGpp with moderate affinity, with high nucleotide exchange rates and a fairly low GTP hydrolysis rate. Plays a role in control of the cell cycle, stress response, ribosome biogenesis and in those bacteria that undergo differentiation, in morphogenesis control. This Campylobacter jejuni subsp. jejuni serotype O:6 (strain 81116 / NCTC 11828) protein is GTPase Obg.